The sequence spans 439 residues: Histidine--tRNA ligase (439 aa).

This sequence belongs to the class-II aminoacyl-tRNA synthetase family. Homodimer.

It localises to the cytoplasm. The catalysed reaction is tRNA(His) + L-histidine + ATP = L-histidyl-tRNA(His) + AMP + diphosphate + H(+). The polypeptide is Histidine--tRNA ligase (Leptospira borgpetersenii serovar Hardjo-bovis (strain L550)).